The sequence spans 93 residues: Putative pterin-4-alpha-carbinolamine dehydratase (93 aa).

This sequence belongs to the pterin-4-alpha-carbinolamine dehydratase family.

It carries out the reaction (4aS,6R)-4a-hydroxy-L-erythro-5,6,7,8-tetrahydrobiopterin = (6R)-L-erythro-6,7-dihydrobiopterin + H2O. The chain is Putative pterin-4-alpha-carbinolamine dehydratase from Sulfurisphaera tokodaii (strain DSM 16993 / JCM 10545 / NBRC 100140 / 7) (Sulfolobus tokodaii).